Here is a 111-residue protein sequence, read N- to C-terminus: uncharacterized protein (111 aa).

This is an uncharacterized protein from Acanthamoeba polyphaga mimivirus (APMV).